The chain runs to 283 residues: Bifunctional protein FolD (283 aa).

Residues 166-168 (GAS) and Ile-232 each bind NADP(+).

The protein belongs to the tetrahydrofolate dehydrogenase/cyclohydrolase family. In terms of assembly, homodimer.

The catalysed reaction is (6R)-5,10-methylene-5,6,7,8-tetrahydrofolate + NADP(+) = (6R)-5,10-methenyltetrahydrofolate + NADPH. It carries out the reaction (6R)-5,10-methenyltetrahydrofolate + H2O = (6R)-10-formyltetrahydrofolate + H(+). Its pathway is one-carbon metabolism; tetrahydrofolate interconversion. Functionally, catalyzes the oxidation of 5,10-methylenetetrahydrofolate to 5,10-methenyltetrahydrofolate and then the hydrolysis of 5,10-methenyltetrahydrofolate to 10-formyltetrahydrofolate. The polypeptide is Bifunctional protein FolD (Wigglesworthia glossinidia brevipalpis).